We begin with the raw amino-acid sequence, 715 residues long: Fatty acid oxidation complex subunit alpha (715 aa).

The tract at residues 1–190 is enoyl-CoA hydratase/isomerase; the sequence is MIYEGKAITV…KVGAVDAVVA (190 aa). Aspartate 297 is a binding site for substrate. The interval 312–715 is 3-hydroxyacyl-CoA dehydrogenase; sequence KDVKQAAVLG…MAKNGQSFFG (404 aa). Residues methionine 325, aspartate 344, 401-403, lysine 408, and serine 430 contribute to the NAD(+) site; that span reads VVE. The active-site For 3-hydroxyacyl-CoA dehydrogenase activity is histidine 451. An NAD(+)-binding site is contributed by asparagine 454. 2 residues coordinate substrate: asparagine 501 and tyrosine 660.

It in the N-terminal section; belongs to the enoyl-CoA hydratase/isomerase family. In the C-terminal section; belongs to the 3-hydroxyacyl-CoA dehydrogenase family. In terms of assembly, heterotetramer of two alpha chains (FadB) and two beta chains (FadA).

The enzyme catalyses a (3S)-3-hydroxyacyl-CoA + NAD(+) = a 3-oxoacyl-CoA + NADH + H(+). It catalyses the reaction a (3S)-3-hydroxyacyl-CoA = a (2E)-enoyl-CoA + H2O. The catalysed reaction is a 4-saturated-(3S)-3-hydroxyacyl-CoA = a (3E)-enoyl-CoA + H2O. It carries out the reaction (3S)-3-hydroxybutanoyl-CoA = (3R)-3-hydroxybutanoyl-CoA. The enzyme catalyses a (3Z)-enoyl-CoA = a 4-saturated (2E)-enoyl-CoA. It catalyses the reaction a (3E)-enoyl-CoA = a 4-saturated (2E)-enoyl-CoA. It participates in lipid metabolism; fatty acid beta-oxidation. In terms of biological role, involved in the aerobic and anaerobic degradation of long-chain fatty acids via beta-oxidation cycle. Catalyzes the formation of 3-oxoacyl-CoA from enoyl-CoA via L-3-hydroxyacyl-CoA. It can also use D-3-hydroxyacyl-CoA and cis-3-enoyl-CoA as substrate. In Pseudomonas fluorescens (strain Pf0-1), this protein is Fatty acid oxidation complex subunit alpha.